Here is a 301-residue protein sequence, read N- to C-terminus: Putative S-adenosyl-L-methionine-dependent methyltransferase MMAR_4850 (301 aa).

Residues Asp-127 and 156-157 (DL) contribute to the S-adenosyl-L-methionine site.

Belongs to the UPF0677 family.

In terms of biological role, exhibits S-adenosyl-L-methionine-dependent methyltransferase activity. This chain is Putative S-adenosyl-L-methionine-dependent methyltransferase MMAR_4850, found in Mycobacterium marinum (strain ATCC BAA-535 / M).